Here is a 92-residue protein sequence, read N- to C-terminus: Small ribosomal subunit protein uS19c (92 aa).

It belongs to the universal ribosomal protein uS19 family.

It is found in the plastid. The protein localises to the chloroplast. Protein S19 forms a complex with S13 that binds strongly to the 16S ribosomal RNA. In Gracilaria tenuistipitata var. liui (Red alga), this protein is Small ribosomal subunit protein uS19c.